We begin with the raw amino-acid sequence, 446 residues long: Corrinoid/iron-sulfur protein large subunit (446 aa).

The 4Fe-4S domain occupies 2–59 (PLTGLEIYKQLPKKNCGECGTPTCLAFAMNLASGKASLDSCPYVSDAAREALDAAAAP). Residues Cys17, Cys20, Cys25, and Cys42 each coordinate [4Fe-4S] cluster. 5-methoxybenzimidazolylcob(I)amide is bound by residues Thr340, Thr346, 370–373 (GLSV), and Ala433.

As to quaternary structure, heterohexamer composed of 2 subunits of AcsC, 2 subunits of AcsD and 2 subunits of AcsE. [4Fe-4S] cluster serves as cofactor.

Acts as a methyl group carrier in the anaerobic acetyl-CoA pathway (Wood-Ljungdahl pathway) of carbon monoxide and carbon dioxide fixation. Binds the corrinoid 5-methoxybenzimidazolylcobamide which is then methylated by the AcsE subunit. In Moorella thermoacetica (Clostridium thermoaceticum), this protein is Corrinoid/iron-sulfur protein large subunit (acsC).